The following is a 227-amino-acid chain: PKHD-type hydroxylase Mnod_1077 (227 aa).

Residues 78 to 178 (RVLPPLFNRY…RWSAFFWSQS (101 aa)) enclose the Fe2OG dioxygenase domain. The Fe cation site is built by histidine 96, aspartate 98, and histidine 159. Residue arginine 169 participates in 2-oxoglutarate binding.

Requires Fe(2+) as cofactor. L-ascorbate is required as a cofactor.

This Methylobacterium nodulans (strain LMG 21967 / CNCM I-2342 / ORS 2060) protein is PKHD-type hydroxylase Mnod_1077.